Consider the following 282-residue polypeptide: MGQIINGKEVALKIKEEIKTFVEERKNNKLRIPKIASILVGNDGGSIYYMSSQEKVANSLGVDFLKIILEENVTDDDVINEIHKLNDDVNVQGIMLQLPLPKHLNEKKIIKEISVKKDIDCLTFESQGKLYMGEKGFLPCTPNSVVTLIKSLNVDITGKEVVVLGRSNIVGKPVAQLLLNENATVTICHSKTKNLKEVCSKADILVVAIGKPKFIDEEYIKENAIVIDVGTSSFEGKITGDVNFDKVIDKASFLTPVPGGVGALTTTLLIKNSCEALKEYED.

NADP(+) is bound by residues 165–167 (GRS), Ser-190, and Thr-231.

This sequence belongs to the tetrahydrofolate dehydrogenase/cyclohydrolase family. In terms of assembly, homodimer.

It carries out the reaction (6R)-5,10-methylene-5,6,7,8-tetrahydrofolate + NADP(+) = (6R)-5,10-methenyltetrahydrofolate + NADPH. The enzyme catalyses (6R)-5,10-methenyltetrahydrofolate + H2O = (6R)-10-formyltetrahydrofolate + H(+). Its pathway is one-carbon metabolism; tetrahydrofolate interconversion. In terms of biological role, catalyzes the oxidation of 5,10-methylenetetrahydrofolate to 5,10-methenyltetrahydrofolate and then the hydrolysis of 5,10-methenyltetrahydrofolate to 10-formyltetrahydrofolate. This is Bifunctional protein FolD from Clostridium botulinum (strain Alaska E43 / Type E3).